Reading from the N-terminus, the 3054-residue chain is Genome polyprotein (3054 aa).

One can recognise a Peptidase S30 domain in the interval 163 to 304 (FLPATSLSNV…FAVCHSMTHY (142 aa)). Residues His-214, Asp-223, and Ser-256 each act as for P1 proteinase activity in the active site. An Involved in interaction with stylet and aphid transmission motif is present at residues 358–361 (KITC). The Involved in virions binding and aphid transmission signature appears at 615–617 (PTK). The 123-residue stretch at 641 to 763 (MYIANEGYCY…ESEMKTYNVG (123 aa)) folds into the Peptidase C6 domain. Active-site for helper component proteinase activity residues include Cys-649 and His-722. Positions 1234 to 1386 (EISHSPARDF…TQFPVKLKIE (153 aa)) constitute a Helicase ATP-binding domain. 1247 to 1254 (GAVGSGKS) contacts ATP. Positions 1336–1339 (DECH) match the DECH box motif. Positions 1401–1564 (GANADVISCG…NLPVTTQSVS (164 aa)) constitute a Helicase C-terminal domain. The Nuclear localization signal motif lies at 1889-1896 (NKGKRKGT). O-(5'-phospho-RNA)-tyrosine is present on Tyr-1911. The 218-residue stretch at 2038–2255 (GESLFKGPRD…VLWGGHKVFM (218 aa)) folds into the Peptidase C4 domain. Active-site for nuclear inclusion protein A activity residues include His-2083, Asp-2118, and Cys-2188. The 121-residue stretch at 2521-2641 (WVYCDADGSQ…AIHPDKAERL (121 aa)) folds into the RdRp catalytic domain. The disordered stretch occupies residues 2798–2827 (GADAGKKKDQKDDKVAEQASKDRDVNAGTS). The span at 2801–2822 (AGKKKDQKDDKVAEQASKDRDV) shows a compositional bias: basic and acidic residues. Thr-3038 carries the phosphothreonine modification.

The protein belongs to the potyviridae genome polyprotein family. Interacts with host eIF4E protein (via cap-binding region); this interaction mediates the translation of the VPg-viral RNA conjugates. Part of a complex that comprises VPg, RNA, host EIF4E and EIF4G; this interaction mediates the translation of the VPg-viral RNA conjugates. Interaction is possible in susceptible hosts but impaired in resistant plants: the VPg of strain HAT interacts with tomato eIF4E1 and eIF4E2 as well as with Capsicum annuum eIF4E1 susceptible alleles pvr2(+), pvr2(3) and pvr2(9) but not with the resistant allele pvr2(2), the VPg of strain CAA10 interacts with C.annuum eIF4E1 susceptible alleles pvr2(+), pvr2(2), pvr2(3) and pvr2(9), the VPg of strain NW interacts at least with C.annuum eIF4E1. As to quaternary structure, homodimer; disulfide-linked. VPg is uridylylated by the polymerase and is covalently attached to the 5'-end of the genomic RNA. This uridylylated form acts as a nucleotide-peptide primer for the polymerase. In terms of processing, potyviral RNA is expressed as two polyproteins which undergo post-translational proteolytic processing. Genome polyprotein is processed by NIa-pro, P1 and HC-pro proteinases resulting in the production of at least ten individual proteins. P3N-PIPO polyprotein is cleaved by P1 and HC-pro proteinases resulting in the production of three individual proteins. The P1 proteinase and the HC-pro cleave only their respective C-termini autocatalytically. 6K1 is essential for proper proteolytic separation of P3 from CI.

The protein resides in the host cytoplasmic vesicle. Its subcellular location is the host nucleus. It is found in the virion. The catalysed reaction is RNA(n) + a ribonucleoside 5'-triphosphate = RNA(n+1) + diphosphate. It catalyses the reaction Hydrolyzes glutaminyl bonds, and activity is further restricted by preferences for the amino acids in P6 - P1' that vary with the species of potyvirus, e.g. Glu-Xaa-Xaa-Tyr-Xaa-Gln-|-(Ser or Gly) for the enzyme from tobacco etch virus. The natural substrate is the viral polyprotein, but other proteins and oligopeptides containing the appropriate consensus sequence are also cleaved.. It carries out the reaction Hydrolyzes a Gly-|-Gly bond at its own C-terminus, commonly in the sequence -Tyr-Xaa-Val-Gly-|-Gly, in the processing of the potyviral polyprotein.. Functionally, required for aphid transmission and also has proteolytic activity. Only cleaves a Gly-Gly dipeptide at its own C-terminus. Interacts with virions and aphid stylets. Acts as a suppressor of RNA-mediated gene silencing, also known as post-transcriptional gene silencing (PTGS), a mechanism of plant viral defense that limits the accumulation of viral RNAs. May have RNA-binding activity. Has helicase activity. It may be involved in replication. In terms of biological role, indispensable for virus replication. Reduces the abundance of host transcripts related to jasmonic acid biosynthesis therefore altering the host defenses. In order to increase its own stability, decreases host protein degradation pathways. Its function is as follows. Indispensable for virus replication. Functionally, mediates the cap-independent, EIF4E-dependent translation of viral genomic RNAs. Binds to the cap-binding site of host EIF4E and thus interferes with the host EIF4E-dependent mRNA export and translation. VPg-RNA directly binds EIF4E and is a template for transcription. Also forms trimeric complexes with EIF4E-EIF4G, which are templates for translation. Has RNA-binding and proteolytic activities. In terms of biological role, an RNA-dependent RNA polymerase that plays an essential role in the virus replication. Its function is as follows. Involved in aphid transmission, cell-to-cell and systemis movement, encapsidation of the viral RNA and in the regulation of viral RNA amplification. The sequence is that of Genome polyprotein from Capsicum annuum (Capsicum pepper).